The sequence spans 161 residues: Regulator of ribonuclease activity A (161 aa).

It belongs to the RraA family. Homotrimer. Binds to both RNA-binding sites in the C-terminal region of Rne and to RhlB.

It localises to the cytoplasm. Globally modulates RNA abundance by binding to RNase E (Rne) and regulating its endonucleolytic activity. Can modulate Rne action in a substrate-dependent manner by altering the composition of the degradosome. Modulates RNA-binding and helicase activities of the degradosome. This Shigella flexneri serotype 5b (strain 8401) protein is Regulator of ribonuclease activity A.